We begin with the raw amino-acid sequence, 208 residues long: MSLKGTIVLLGLLWSFQATLGIRFVIDREECFSHKAEYEGDTLHVSFVVIKSDSQWHFNEDGVDLVIHGPTGEQIHDFREQISAKHDFVVQKKGVYRFCFTNKSPYHETIDFDVQLGHFAYYDQHAKDEHFTPLMEQISKLEEALYNIQFEQHWLEAQTDRQAIVNENMSKRAVHKALFESFALIGASFLQVYLLRRLFERKLGMSRV.

A signal peptide spans 1–21 (MSLKGTIVLLGLLWSFQATLG). The Lumenal segment spans residues 22–176 (IRFVIDREEC…ENMSKRAVHK (155 aa)). One can recognise a GOLD domain in the interval 29-116 (EECFSHKAEY…HETIDFDVQL (88 aa)). The stretch at 134-149 (LMEQISKLEEALYNIQ) forms a coiled coil. A glycan (N-linked (GlcNAc...) asparagine) is linked at Asn168. A helical transmembrane segment spans residues 177 to 195 (ALFESFALIGASFLQVYLL). Over 196-208 (RRLFERKLGMSRV) the chain is Cytoplasmic. The COPII vesicle coat-binding signature appears at 198 to 199 (LF). The COPI vesicle coat-binding motif lies at 198–208 (LFERKLGMSRV). Residues 207–208 (RV) carry the Required for the export from the endoplasmic reticulum to the Golgi motif.

This sequence belongs to the EMP24/GP25L family. As to quaternary structure, probably oligomerizes with other members of the EMP24/GP25L family. Associates with the COPI vesicle coat (coatomer). Associates with the COPII vesicle coat (coatomer). Interacts with p24delta5.

The protein resides in the golgi apparatus. It is found in the cis-Golgi network membrane. The protein localises to the golgi stack membrane. Involved in vesicular protein trafficking. Mainly functions in the early secretory pathway but also in post-Golgi membranes. Thought to act as cargo receptor at the lumenal side for incorporation of secretory cargo molecules into transport vesicles and to be involved in vesicle coat formation at the cytoplasmic side. Interacts with p24delta5 at endoplasmic reticulum export sites for endoplasmic reticulum exit and coupled transport to the Golgi apparatus. This chain is Transmembrane emp24 domain-containing protein p24beta2, found in Arabidopsis thaliana (Mouse-ear cress).